The primary structure comprises 528 residues: MDAQIKNEIVELTKAMLETFTKEYIKAYTIQITKKAIKDAKAIPSPYLLEPRPRDHDKSDVFSGYLVKLGAIRKNWLKRHFVVRYDYSIDYFVDDKHTNKKGTINLCGYSVNDDPNKSGLDRILKIAEKMGVDTSSIPKPAQLPPFTIELYHYSRRCYYIQCANEEEFKEWIEIFKTCCRRSHGFKNKDPCHIAAFGIAVRNTRWSLGRWGWFGYGGNENQILSDIILDEIEYDILGRALSKLPNAPWFIRNYLRNKMMTVIEGMVSSAVAPAWTGLSKTVEELRPTIEPRIKNQVDPIAQAQTNIINKMRESMMSQIKPAMEEHVNKHLKKIIGEIRTPIENGFDESLKIWNEKTNAYNGNGSTESFSSYRSYPNSYWTMYPAKDKISPLYSIVEEYRPIFRDYSSYFICYDIKESINNMAYDGAYTLEKTVTQDQVDVASAKNQTHSKYQHDVILGTNMQLKFVVREMVKPTLCKIINPLTKPLLNTLSSSIPSAIGDFIDINELYNQLVDDILNDSTQVVIDELN.

One can recognise a PH domain in the interval 59–180 (SDVFSGYLVK…WIEIFKTCCR (122 aa)).

The sequence is that of PH domain-containing protein DDB_G0267786 from Dictyostelium discoideum (Social amoeba).